A 218-amino-acid chain; its full sequence is Cell division protein SepF (218 aa).

Residues 24–115 are disordered; it reads EDVTASTDNV…IANRREQYQQ (92 aa). Polar residues predominate over residues 28-43; it reads ASTDNVIPRSQQSVRA. The span at 47 to 63 shows a compositional bias: basic and acidic residues; the sequence is PKQEPRNNHVQQDHQAR.

The protein belongs to the SepF family. In terms of assembly, homodimer. Interacts with FtsZ.

It localises to the cytoplasm. Its function is as follows. Cell division protein that is part of the divisome complex and is recruited early to the Z-ring. Probably stimulates Z-ring formation, perhaps through the cross-linking of FtsZ protofilaments. Its function overlaps with FtsA. The sequence is that of Cell division protein SepF from Streptococcus pyogenes serotype M4 (strain MGAS10750).